The following is a 412-amino-acid chain: Multifunctional CCA protein (412 aa).

Positions 8 and 11 each coordinate ATP. CTP is bound by residues glycine 8 and arginine 11. Mg(2+)-binding residues include aspartate 21 and aspartate 23. The ATP site is built by arginine 91, arginine 137, and arginine 140. CTP contacts are provided by arginine 91, arginine 137, and arginine 140. One can recognise an HD domain in the interval threonine 228–tryptophan 329.

The protein belongs to the tRNA nucleotidyltransferase/poly(A) polymerase family. Bacterial CCA-adding enzyme type 1 subfamily. Monomer. Can also form homodimers and oligomers. Requires Mg(2+) as cofactor. Ni(2+) is required as a cofactor.

It catalyses the reaction a tRNA precursor + 2 CTP + ATP = a tRNA with a 3' CCA end + 3 diphosphate. The catalysed reaction is a tRNA with a 3' CCA end + 2 CTP + ATP = a tRNA with a 3' CCACCA end + 3 diphosphate. Catalyzes the addition and repair of the essential 3'-terminal CCA sequence in tRNAs without using a nucleic acid template. Adds these three nucleotides in the order of C, C, and A to the tRNA nucleotide-73, using CTP and ATP as substrates and producing inorganic pyrophosphate. tRNA 3'-terminal CCA addition is required both for tRNA processing and repair. Also involved in tRNA surveillance by mediating tandem CCA addition to generate a CCACCA at the 3' terminus of unstable tRNAs. While stable tRNAs receive only 3'-terminal CCA, unstable tRNAs are marked with CCACCA and rapidly degraded. This chain is Multifunctional CCA protein, found in Escherichia coli (strain SMS-3-5 / SECEC).